Consider the following 284-residue polypeptide: Nucleoid occlusion protein (284 aa).

Positions 143–162 form a DNA-binding region, H-T-H motif; that stretch reads EALAQRVGKSQSAIANKMRL.

This sequence belongs to the ParB family.

Its subcellular location is the cytoplasm. It is found in the nucleoid. Its function is as follows. Effects nucleoid occlusion by binding relatively nonspecifically to DNA and preventing the assembly of the division machinery in the vicinity of the nucleoid, especially under conditions that disturb the cell cycle. It helps to coordinate cell division and chromosome segregation by preventing the formation of the Z ring through the nucleoid, which would cause chromosome breakage. The polypeptide is Nucleoid occlusion protein (Listeria monocytogenes serovar 1/2a (strain ATCC BAA-679 / EGD-e)).